Consider the following 158-residue polypeptide: U4/U6.U5 small nuclear ribonucleoprotein 27 kDa protein (158 aa).

Residues 1–102 are disordered; sequence MGRSRSRSPE…AEDLEGKTEE (102 aa). Basic residues predominate over residues 13–59; that stretch reads RERRRSRSASRERERRRRERSRSRERRRSRSRSPHRRRSRSPRRHRS. A compositionally biased stretch (basic and acidic residues) spans 66–101; the sequence is RLKDRRDDDKKEPKESKGGGSKERQLAAEDLEGKTE.

Belongs to the SNUT3 family. As to quaternary structure, part of a tri-snRNP complex.

The protein resides in the nucleus. Functionally, may play a role in mRNA splicing. The sequence is that of U4/U6.U5 small nuclear ribonucleoprotein 27 kDa protein (snrnp27) from Xenopus laevis (African clawed frog).